The chain runs to 360 residues: Probable arginine kinase ZC434.8 (360 aa).

The Phosphagen kinase N-terminal domain occupies 10 to 92 (SIEEVYTKLQ…FNPVIEEYHN (83 aa)). Residue 65–69 (GVGIY) coordinates substrate. Residues 122-359 (FIVSTRIRCG…KKLIELEKAA (238 aa)) form the Phosphagen kinase C-terminal domain. Residues 125–129 (STRIR) and His189 contribute to the ATP site. Substrate is bound at residue Glu229. Arg233 contributes to the ATP binding site. Residue Cys275 coordinates substrate. Residues 284-288 (RASVH), 312-317 (RGIHGE), and Asp327 contribute to the ATP site. Glu317 lines the substrate pocket.

The protein belongs to the ATP:guanido phosphotransferase family.

It catalyses the reaction L-arginine + ATP = N(omega)-phospho-L-arginine + ADP + H(+). The sequence is that of Probable arginine kinase ZC434.8 from Caenorhabditis elegans.